The chain runs to 397 residues: HTH-type transcriptional regulator GalR (397 aa).

HTH lysR-type domains lie at 7 to 64 (PNLM…MRLT) and 99 to 156 (FQAR…LQPT). DNA-binding regions (H-T-H motif) lie at residues 24–43 (VSRA…RAIA) and 116–135 (MQTV…AALK).

The protein belongs to the LysR transcriptional regulatory family.

Its function is as follows. Transcriptional regulator for the galBCD and galTAP operons, encoding genes of the gallate degradation pathway. This chain is HTH-type transcriptional regulator GalR (galR), found in Pseudomonas putida (strain ATCC 47054 / DSM 6125 / CFBP 8728 / NCIMB 11950 / KT2440).